A 352-amino-acid chain; its full sequence is Protein YpbB (352 aa).

In terms of assembly, interacts with RecS and SSB (ssbA); the 6 C-terminal residues of SSB are required for interaction with YpbB.

Its subcellular location is the cytoplasm. It localises to the nucleoid. The protein is Protein YpbB (ypbB) of Bacillus subtilis (strain 168).